Consider the following 436-residue polypeptide: Histidine--tRNA ligase (436 aa).

It belongs to the class-II aminoacyl-tRNA synthetase family. In terms of assembly, homodimer.

It is found in the cytoplasm. The enzyme catalyses tRNA(His) + L-histidine + ATP = L-histidyl-tRNA(His) + AMP + diphosphate + H(+). This chain is Histidine--tRNA ligase, found in Prochlorococcus marinus (strain MIT 9303).